We begin with the raw amino-acid sequence, 102 residues long: Large ribosomal subunit protein bL21 (102 aa).

This sequence belongs to the bacterial ribosomal protein bL21 family. As to quaternary structure, part of the 50S ribosomal subunit. Contacts protein L20.

In terms of biological role, this protein binds to 23S rRNA in the presence of protein L20. The chain is Large ribosomal subunit protein bL21 from Listeria innocua serovar 6a (strain ATCC BAA-680 / CLIP 11262).